Here is a 424-residue protein sequence, read N- to C-terminus: tRNA modification GTPase MnmE (424 aa).

Residues arginine 20, glutamate 77, and arginine 117 each contribute to the (6S)-5-formyl-5,6,7,8-tetrahydrofolate site. Positions 212–351 (GVRVVFAGPP…LVRDLRDAAR (140 aa)) constitute a TrmE-type G domain. Position 222 (asparagine 222) interacts with K(+). GTP contacts are provided by residues 222-227 (NAGKST), 241-247 (SPIAGTT), and 266-269 (DTAG). Serine 226 is a binding site for Mg(2+). 3 residues coordinate K(+): serine 241, isoleucine 243, and threonine 246. Threonine 247 is a binding site for Mg(2+). Lysine 424 is a (6S)-5-formyl-5,6,7,8-tetrahydrofolate binding site.

The protein belongs to the TRAFAC class TrmE-Era-EngA-EngB-Septin-like GTPase superfamily. TrmE GTPase family. As to quaternary structure, homodimer. Heterotetramer of two MnmE and two MnmG subunits. K(+) is required as a cofactor.

The protein localises to the cytoplasm. In terms of biological role, exhibits a very high intrinsic GTPase hydrolysis rate. Involved in the addition of a carboxymethylaminomethyl (cmnm) group at the wobble position (U34) of certain tRNAs, forming tRNA-cmnm(5)s(2)U34. In Erythrobacter litoralis (strain HTCC2594), this protein is tRNA modification GTPase MnmE.